The following is a 932-amino-acid chain: Chaperone protein ClpC3, chloroplastic (932 aa).

The interval 1–20 (MERTLLNPPPSLRSPACRTT) is disordered. The transit peptide at 1 to 48 (MERTLLNPPPSLRSPACRTTTATRIRPSSSMATMIPTPPPMRHARLVK) directs the protein to the chloroplast. A Clp R domain is found at 99–240 (FDMFTDKAIK…RSEVIRMISD (142 aa)). Repeat regions lie at residues 102-167 (FTDK…AGRG) and 177-240 (FTPA…MISD). Positions 264-511 (LLEYGTNLTK…LVRLRNAQLP (248 aa)) are i. 309-316 (GEPGVGKT) is a binding site for ATP. The UVR domain occupies 518–553 (EKKLKKIMAEKSEAIRSQDFEKAGALRGEEVELKSE). Residues 579 to 770 (VTEADVQHIV…LIIMTSNVGS (192 aa)) form an II region. Residue 653–660 (GPTGVGKS) participates in ATP binding.

Belongs to the ClpA/ClpB family. ClpC subfamily.

Its subcellular location is the plastid. The protein localises to the chloroplast. Molecular chaperone that may interact with a ClpP-like protease involved in degradation of denatured proteins in the chloroplast. This is Chaperone protein ClpC3, chloroplastic (CLPC3) from Oryza sativa subsp. japonica (Rice).